A 233-amino-acid chain; its full sequence is Attacin-B (233 aa).

The first 17 residues, 1–17 (MFAKLFLVSVLLVGVNS), serve as a signal peptide directing secretion. The propeptide occupies 18–46 (RYVLVEEPGYYDKQYEEQPQQWVNSRVRR).

It belongs to the attacin/sarcotoxin-2 family.

Its subcellular location is the secreted. Hemolymph antibacterial protein. This is Attacin-B from Hyalophora cecropia (Cecropia moth).